The primary structure comprises 353 residues: Guanine nucleotide-binding protein subunit alpha (353 aa).

Residues 1-25 (MGCGMSTEDKEGKARNEEIENQLKR) are disordered. A lipid anchor (N-myristoyl glycine) is attached at G2. A lipid anchor (S-palmitoyl cysteine) is attached at C3. Positions 7–25 (TEDKEGKARNEEIENQLKR) are enriched in basic and acidic residues. In terms of domain architecture, G-alpha spans 32–353 (NEIKMLLLGA…QENLRLCGLI (322 aa)). Positions 35 to 48 (KMLLLGAGESGKST) are G1 motif. E43, S44, G45, K46, S47, T48, D150, L175, T181, G203, N269, K270, D272, and A325 together coordinate GTP. A Mg(2+)-binding site is contributed by S47. The G2 motif stretch occupies residues 173–181 (DVLRSRVKT). T181 serves as a coordination point for Mg(2+). The segment at 196–205 (YRMFDVGGQR) is G3 motif. Residues 265–272 (ILFLNKID) form a G4 motif region. Residues 323–328 (TCATDT) form a G5 motif region.

The protein belongs to the G-alpha family. G(q) subfamily. As to quaternary structure, g proteins are composed of 3 units; alpha, beta and gamma. The alpha chain contains the guanine nucleotide binding site. It depends on Mg(2+) as a cofactor.

Its function is as follows. Guanine nucleotide-binding proteins (G proteins) are involved as modulators or transducers in various transmembrane signaling systems. This chain is Guanine nucleotide-binding protein subunit alpha (CTG1), found in Colletotrichum trifolii.